We begin with the raw amino-acid sequence, 339 residues long: Serine/threonine-protein kinase SAPK2 (339 aa).

One can recognise a Protein kinase domain in the interval 4–260 (YEVIKDIGSG…IPEIKNHPWF (257 aa)). ATP contacts are provided by residues 10–18 (IGSGNFGVA) and Lys33. The active-site Proton acceptor is Asp123. The C-terminal stretch occupies residues 253–339 (EIKNHPWFLK…EDSGDFVCAL (87 aa)).

Belongs to the protein kinase superfamily. Ser/Thr protein kinase family. Post-translationally, phosphorylated.

It carries out the reaction L-seryl-[protein] + ATP = O-phospho-L-seryl-[protein] + ADP + H(+). It catalyses the reaction L-threonyl-[protein] + ATP = O-phospho-L-threonyl-[protein] + ADP + H(+). May play a role in signal transduction of hyperosmotic response. Can phosphorylate BZIP46 in vitro. The polypeptide is Serine/threonine-protein kinase SAPK2 (SAPK2) (Oryza sativa subsp. indica (Rice)).